We begin with the raw amino-acid sequence, 537 residues long: Beta-galactoside alpha-2,6-sialyltransferase 2 (537 aa).

The Cytoplasmic portion of the chain corresponds to 1–10; that stretch reads MKSWVRQGRR. The helical; Signal-anchor for type II membrane protein transmembrane segment at 11 to 31 threads the bilayer; it reads LVLVGMLAWVLLFLALLSYFL. Residues 32–537 are Lumenal-facing; it reads DARVNEPLTS…PGFSTVDCDI (506 aa). Disordered stretches follow at residues 83-117 and 134-202; these read TRDEPRPSATPEFSLEASQSPDSAPLAIYGGPEGI and GTEN…GDSS. A compositionally biased stretch (polar residues) spans 134-145; sequence GTENIGSQSDPV. The segment covering 166-185 has biased composition (acidic residues); it reads EEEEEEEEEEERQENEDEDV. 3 cysteine pairs are disulfide-bonded: Cys265–Cys535, Cys312–Cys464, and Cys482–Cys493. N-linked (GlcNAc...) asparagine glycans are attached at residues Asn353 and Asn373.

This sequence belongs to the glycosyltransferase 29 family.

Its subcellular location is the golgi apparatus. It localises to the golgi stack membrane. The enzyme catalyses a beta-D-galactoside + CMP-N-acetyl-beta-neuraminate = an N-acetyl-alpha-neuraminyl-(2-&gt;6)-beta-D-galactosyl derivative + CMP + H(+). Its function is as follows. Transfers sialic acid from the donor of substrate CMP-sialic acid to galactose containing acceptor substrates. The chain is Beta-galactoside alpha-2,6-sialyltransferase 2 (st6gal2) from Takifugu rubripes (Japanese pufferfish).